A 110-amino-acid polypeptide reads, in one-letter code: uncharacterized protein (110 aa).

The tract at residues 86–110 (SEEIDEPVMKKRHRRKGSPHRAPFF) is disordered. Residues 95-104 (KKRHRRKGSP) are compositionally biased toward basic residues.

This is an uncharacterized protein from Arabidopsis thaliana (Mouse-ear cress).